The following is a 345-amino-acid chain: NADPH dehydrogenase (345 aa).

Residue 23–26 (SPMC) participates in FMN binding. Substrate is bound at residue tyrosine 28. FMN contacts are provided by alanine 60 and glutamine 102. 164–167 (HGAH) is a binding site for substrate. FMN-binding positions include arginine 215 and 307-308 (GR).

This sequence belongs to the NADH:flavin oxidoreductase/NADH oxidase family. NamA subfamily. As to quaternary structure, homotetramer. It depends on FMN as a cofactor.

It carries out the reaction A + NADPH + H(+) = AH2 + NADP(+). Functionally, catalyzes the reduction of the double bond of an array of alpha,beta-unsaturated aldehydes and ketones. It also reduces the nitro group of nitroester and nitroaromatic compounds. It could have a role in detoxification processes. The chain is NADPH dehydrogenase from Bacillus cereus (strain Q1).